Consider the following 592-residue polypeptide: Probable translation initiation factor IF-2 (592 aa).

Residues 5 to 226 (IRSPFVVVMG…AGVSQRFIPR (222 aa)) form the tr-type G domain. Residues 14–21 (GHVDVGKT) are G1. 14-21 (GHVDVGKT) is a GTP binding site. A G2 region spans residues 39-43 (MITQH). The G3 stretch occupies residues 80–83 (DTPG). Residues 80 to 84 (DTPGH) and 134 to 137 (NKLD) each bind GTP. Positions 134-137 (NKLD) are G4. A G5 region spans residues 202 to 204 (SAV).

The protein belongs to the TRAFAC class translation factor GTPase superfamily. Classic translation factor GTPase family. IF-2 subfamily.

Functionally, function in general translation initiation by promoting the binding of the formylmethionine-tRNA to ribosomes. Seems to function along with eIF-2. In Pyrobaculum calidifontis (strain DSM 21063 / JCM 11548 / VA1), this protein is Probable translation initiation factor IF-2.